Consider the following 426-residue polypeptide: Target of rapamycin complex 2 subunit AVO2 (426 aa).

ANK repeat units lie at residues 4–33 (EPSV…DLLT), 39–68 (NGWS…DKHE), 74–104 (KGNT…FINH), 108–137 (NGRA…DLWV), and 141–171 (NGDT…SLDD). Positions 259-302 (STHTTSGNGGNRRSSITNPVFNPRKPTLSTDSFSSSSNSSSRLR) are disordered. Over residues 260–278 (THTTSGNGGNRRSSITNPV) the composition is skewed to polar residues. The segment covering 285-302 (TLSTDSFSSSSNSSSRLR) has biased composition (low complexity). A phosphoserine mark is found at S315 and S350. Residues 350–359 (SNDNVRGDSQ) show a composition bias toward polar residues. The interval 350 to 392 (SNDNVRGDSQTATINDDGGGGNGGDATIGMGLRKDPDDENENK) is disordered. Gly residues predominate over residues 366–375 (DGGGGNGGDA). Basic and acidic residues predominate over residues 381–392 (LRKDPDDENENK).

In terms of assembly, the target of rapamycin complex 2 (TORC2) is composed of at least AVO1, AVO2, BIT61, LST8, TOR2 and TSC11. TORC2 forms a homodimer. Contrary to TORC1, TORC2 does not bind to and is not sensitive to FKBP-rapamycin. AVO2 is peripherally associated to AVO1 and TSC11.

The protein resides in the cell membrane. The protein localises to the vacuole membrane. Functionally, component of TORC2, which regulates cell cycle-dependent polarization of the actin-cytoskeleton and cell wall integrity. TORC2 controls polarity of the actin cytoskeleton, which is required for orienting the secretory pathway toward discrete growth sites, via the RHO1/PKC1/MAPK cell integrity pathway. The chain is Target of rapamycin complex 2 subunit AVO2 (AVO2) from Saccharomyces cerevisiae (strain ATCC 204508 / S288c) (Baker's yeast).